A 130-amino-acid polypeptide reads, in one-letter code: Small ribosomal subunit protein uS9 (130 aa).

Belongs to the universal ribosomal protein uS9 family.

This chain is Small ribosomal subunit protein uS9 (rpsI), found in Geobacillus stearothermophilus (Bacillus stearothermophilus).